The sequence spans 525 residues: Asparagine synthetase domain-containing protein YML096W (525 aa).

Residue cysteine 2 is the For GATase activity of the active site. One can recognise a Glutamine amidotransferase type-2 domain in the interval 2 to 209 (CGILLHYCPN…LNSNQRSHLP (208 aa)). Residues 210-523 (YEVTSEIDLN…GTDLLKENRN (314 aa)) enclose the Asparagine synthetase domain. The tract at residues 503–525 (SAKMTKDGNKHGTDLLKENRNCS) is disordered. Positions 506–525 (MTKDGNKHGTDLLKENRNCS) are enriched in basic and acidic residues.

The protein resides in the cytoplasm. This is Asparagine synthetase domain-containing protein YML096W from Saccharomyces cerevisiae (strain ATCC 204508 / S288c) (Baker's yeast).